A 119-amino-acid chain; its full sequence is Large ribosomal subunit protein uL18 (119 aa).

Residues 1–23 are disordered; sequence MISKPDKNKTRQRRHARVRGKIS. A compositionally biased stretch (basic residues) spans 10 to 20; sequence TRQRRHARVRG.

The protein belongs to the universal ribosomal protein uL18 family. Part of the 50S ribosomal subunit; part of the 5S rRNA/L5/L18/L25 subcomplex. Contacts the 5S and 23S rRNAs.

In terms of biological role, this is one of the proteins that bind and probably mediate the attachment of the 5S RNA into the large ribosomal subunit, where it forms part of the central protuberance. The protein is Large ribosomal subunit protein uL18 of Lacticaseibacillus casei (strain BL23) (Lactobacillus casei).